The chain runs to 101 residues: Small ribosomal subunit protein uS14 (101 aa).

Belongs to the universal ribosomal protein uS14 family. As to quaternary structure, part of the 30S ribosomal subunit. Contacts proteins S3 and S10.

Its function is as follows. Binds 16S rRNA, required for the assembly of 30S particles and may also be responsible for determining the conformation of the 16S rRNA at the A site. The protein is Small ribosomal subunit protein uS14 of Corynebacterium efficiens (strain DSM 44549 / YS-314 / AJ 12310 / JCM 11189 / NBRC 100395).